A 193-amino-acid chain; its full sequence is NADH-quinone oxidoreductase subunit B (193 aa).

Positions 49, 50, 115, and 144 each coordinate [4Fe-4S] cluster. A disordered region spans residues 172–193 (FKKEEPREANAPVPVNTEMPLE).

The protein belongs to the complex I 20 kDa subunit family. NDH-1 is composed of 14 different subunits. Subunits NuoB, C, D, E, F, and G constitute the peripheral sector of the complex. Requires [4Fe-4S] cluster as cofactor.

Its subcellular location is the cell inner membrane. The enzyme catalyses a quinone + NADH + 5 H(+)(in) = a quinol + NAD(+) + 4 H(+)(out). Its function is as follows. NDH-1 shuttles electrons from NADH, via FMN and iron-sulfur (Fe-S) centers, to quinones in the respiratory chain. The immediate electron acceptor for the enzyme in this species is believed to be ubiquinone. Couples the redox reaction to proton translocation (for every two electrons transferred, four hydrogen ions are translocated across the cytoplasmic membrane), and thus conserves the redox energy in a proton gradient. This is NADH-quinone oxidoreductase subunit B from Akkermansia muciniphila (strain ATCC BAA-835 / DSM 22959 / JCM 33894 / BCRC 81048 / CCUG 64013 / CIP 107961 / Muc).